A 174-amino-acid chain; its full sequence is Large ribosomal subunit protein uL15 (174 aa).

Disordered stretches follow at residues 1-57 and 147-174; these read MKLH…QMRI and PWVV…PQKA. Positions 21-35 are enriched in gly residues; sequence RGIGSGKGKTGGKGM.

Belongs to the universal ribosomal protein uL15 family. Part of the 50S ribosomal subunit.

Binds to the 23S rRNA. The protein is Large ribosomal subunit protein uL15 of Roseiflexus sp. (strain RS-1).